Here is an 81-residue protein sequence, read N- to C-terminus: Protein Vpu (81 aa).

Residues 1–7 lie on the Extracellular side of the membrane; sequence MQSLQVL. A helical membrane pass occupies residues 8 to 28; sequence AIVALVVATIIAIVVWTIVFI. The Cytoplasmic segment spans residues 29–81; the sequence is EYRKILRQRKIDRLINRITERAEDSGNESDGDQEELSALVERGHLAPWDVDDL. Positions 50 to 81 are disordered; that stretch reads AEDSGNESDGDQEELSALVERGHLAPWDVDDL. Phosphoserine; by host CK2 is present on residues Ser53 and Ser57. Over residues 53–63 the composition is skewed to acidic residues; it reads SGNESDGDQEE.

Belongs to the HIV-1 VPU protein family. In terms of assembly, homopentamer. Interacts with host CD4 and BRTC; these interactions induce proteasomal degradation of CD4. Interacts with host BST2; this interaction leads to the degradation of host BST2. Interacts with host FBXW11. Interacts with host AP1M1; this interaction plays a role in the mistrafficking and subsequent degradation of host BST2. Interacts with host RANBP2; this interaction allows Vpu to down-regulate host BLM sumoylation. Phosphorylated by host CK2. This phosphorylation is necessary for interaction with human BTRC and degradation of CD4.

It is found in the host membrane. Its activity is regulated as follows. Ion channel activity is inhibited by hexamethylene amiloride in vitro. Functionally, enhances virion budding by targeting host CD4 and Tetherin/BST2 to proteasome degradation. Degradation of CD4 prevents any unwanted premature interactions between viral Env and its host receptor CD4 in the endoplasmic reticulum. Degradation of antiretroviral protein Tetherin/BST2 is important for virion budding, as BST2 tethers new viral particles to the host cell membrane. Mechanistically, Vpu bridges either CD4 or BST2 to BTRC, a substrate recognition subunit of the Skp1/Cullin/F-box protein E3 ubiquitin ligase, induces their ubiquitination and subsequent proteasomal degradation. The alteration of the E3 ligase specificity by Vpu seems to promote the degradation of host IKBKB, leading to NF-kappa-B down-regulation and subsequent apoptosis. Acts as a viroporin that forms an oligomeric ion channel in membranes. Modulates the host DNA repair mechanisms to promote degradation of nuclear viral cDNA in cells that are already productively infected in order to suppress immune sensing and proviral hyper-integration (superinfection). Manipulates PML-NBs and modulates SUMOylation of host BLM protein thereby enhancing its DNA-end processing activity toward viral unintegrated linear DNA. Also inhibits RAD52-mediated homologous repair of viral cDNA, preventing the generation of dead-end circular forms of single copies of the long terminal repeat and permitting sustained nucleolytic attack. This chain is Protein Vpu, found in Human immunodeficiency virus type 1 group M subtype B (isolate YU-2) (HIV-1).